Here is a 66-residue protein sequence, read N- to C-terminus: Large ribosomal subunit protein uL29 (66 aa).

Belongs to the universal ribosomal protein uL29 family. As to quaternary structure, part of the 50S ribosomal subunit.

This Bacillus subtilis (strain 168) protein is Large ribosomal subunit protein uL29 (rpmC).